The sequence spans 229 residues: Probable calcium-binding protein CML22 (229 aa).

EF-hand domains follow at residues 53 to 88 (EGLRNIRSVFESYDNDTNGTIDIEELKKCLEELKLS), 89 to 124 (LSDEEVKGLYSWCDVDGSKGIQFNEFIVLLCLIYLL), 145 to 180 (SIFDPIVEVFLFLDKDGKGKLNKADVIKTLNNEDYP), and 184 to 219 (SPSHVTNMRFEEMDWGRKGKVGFREFLFAFMSWVGL). Residues Asp66, Asp68, Asn70, Thr72, and Glu77 each coordinate Ca(2+).

In terms of biological role, potential calcium sensor. This Arabidopsis thaliana (Mouse-ear cress) protein is Probable calcium-binding protein CML22 (CML22).